A 1151-amino-acid polypeptide reads, in one-letter code: Semaphorin-5B (1151 aa).

Residues 1–1036 (MPCGFSPSPV…TDCAGFNLIH (1036 aa)) are Extracellular-facing. The 451-residue stretch at 103–553 (HPTVAFEDLQ…LRDGVLRVPL (451 aa)) folds into the Sema domain. Residue asparagine 153 is glycosylated (N-linked (GlcNAc...) asparagine). Cystine bridges form between cysteine 172/cysteine 182 and cysteine 199/cysteine 208. 2 N-linked (GlcNAc...) asparagine glycosylation sites follow: asparagine 236 and asparagine 345. 2 disulfides stabilise this stretch: cysteine 322-cysteine 425 and cysteine 346-cysteine 388. An N-linked (GlcNAc...) asparagine glycan is attached at asparagine 436. The PSI domain occupies 555–602 (RCAAYRSQGACLGARDPYCGWDGKQQRCSTLEDSSNMSLWTQNITACP). 2 TSP type-1 domains span residues 664–720 (NGAW…TPCP) and 722–771 (PIFW…EGCP). Cystine bridges form between cysteine 676/cysteine 713, cysteine 680/cysteine 719, cysteine 691/cysteine 703, cysteine 734/cysteine 765, cysteine 738/cysteine 770, and cysteine 749/cysteine 755. A glycan (O-linked (GalNAc...) threonine) is linked at threonine 788. TSP type-1 domains follow at residues 853 to 908 (SGGW…QACP), 910 to 965 (RGAW…QACP), and 966 to 1010 (EGWS…RPCP). 6 cysteine pairs are disulfide-bonded: cysteine 865–cysteine 902, cysteine 869–cysteine 907, cysteine 880–cysteine 892, cysteine 922–cysteine 959, cysteine 926–cysteine 964, and cysteine 937–cysteine 949. The helical; Signal-anchor for type III membrane protein transmembrane segment at 1037–1057 (LVATGISCFLGSGLLTLAVYL) threads the bilayer. Over 1058–1151 (SCQHCQRQSQ…SPGQRCFPNS (94 aa)) the chain is Cytoplasmic.

This sequence belongs to the semaphorin family.

It is found in the membrane. Functionally, may act as a positive axonal guidance cue. This Homo sapiens (Human) protein is Semaphorin-5B (SEMA5B).